A 145-amino-acid chain; its full sequence is Superoxide dismutase [Mn/Fe] (145 aa).

Positions 10 and 64 each coordinate Fe(3+). Residues His-10 and His-64 each contribute to the Mn(2+) site.

It belongs to the iron/manganese superoxide dismutase family. Mn(2+) is required as a cofactor. The cofactor is Fe(3+).

The enzyme catalyses 2 superoxide + 2 H(+) = H2O2 + O2. Its function is as follows. Destroys superoxide anion radicals which are normally produced within the cells and which are toxic to biological systems. Catalyzes the dismutation of superoxide anion radicals into O2 and H2O2 by successive reduction and oxidation of the transition metal ion at the active site. This is Superoxide dismutase [Mn/Fe] (sodA) from Streptococcus canis.